The following is a 73-amino-acid chain: Beta-defensin 108B (73 aa).

Residues 1–22 form the signal peptide; sequence MRIAVLLFAIFFFMSQVLPARG. 3 disulfide bridges follow: C28–C55, C35–C49, and C39–C56.

Belongs to the beta-defensin family. Specifically expressed in testis. Low expression is detected also in liver.

It is found in the secreted. In terms of biological role, has antibacterial activity. The protein is Beta-defensin 108B (DEFB108B) of Homo sapiens (Human).